A 197-amino-acid chain; its full sequence is Segregation and condensation protein B (197 aa).

It belongs to the ScpB family. As to quaternary structure, homodimer. Homodimerization may be required to stabilize the binding of ScpA to the Smc head domains. Component of a cohesin-like complex composed of ScpA, ScpB and the Smc homodimer, in which ScpA and ScpB bind to the head domain of Smc. The presence of the three proteins is required for the association of the complex with DNA.

The protein resides in the cytoplasm. Participates in chromosomal partition during cell division. May act via the formation of a condensin-like complex containing Smc and ScpA that pull DNA away from mid-cell into both cell halves. The chain is Segregation and condensation protein B from Bacillus pumilus (strain SAFR-032).